A 328-amino-acid polypeptide reads, in one-letter code: MASRCSEPYPEVSRIPTVRGCNGSLSGALSCCEDSARGSGPPKAPTVAEGPSSCLRRNVISERERRKRMSLSCERLRALLPQFDGRREDMASVLEMSVQFLRLASALGPSQEQHAILASSKEMWHSLQEDVLQLTLSSQIQAGVPDPGTGASSGTRTPDVKAFLESPWSLDPASASPEPVPHILASSRQWDPASCTSLGTDKCEALLGLCQVRGGLPPFSEPSSLVPWPPGRSLPKAVRPPLSWPPFSQQQTLPVMSGEALGWLGQAGPLAMGAAPLGEPAKEDPMLAQEAGSALGSDVDDGTSFLLTAGPSSWPGEWGPGFRAGPPA.

Residues 53–104 (SCLRRNVISERERRKRMSLSCERLRALLPQFDGRREDMASVLEMSVQFLRLA) enclose the bHLH domain. A disordered region spans residues 290 to 328 (EAGSALGSDVDDGTSFLLTAGPSSWPGEWGPGFRAGPPA). Residues 310–321 (GPSSWPGEWGPG) are compositionally biased toward low complexity.

Forms both hetero- and homodimers with SOHLH2.

Its subcellular location is the cytoplasm. It is found in the nucleus. In terms of biological role, transcription regulator of both male and female germline differentiation. Suppresses genes involved in spermatogonial stem cells maintenance, and induces genes important for spermatogonial differentiation. Coordinates oocyte differentiation without affecting meiosis I. This Homo sapiens (Human) protein is Spermatogenesis- and oogenesis-specific basic helix-loop-helix-containing protein 1 (SOHLH1).